A 241-amino-acid polypeptide reads, in one-letter code: Chaperone protein FimC (241 aa).

An N-terminal signal peptide occupies residues 1–36; the sequence is MSNKNVNVRKSQEITFCLLAGILMFMAMVVAGRAEA.

This sequence belongs to the periplasmic pilus chaperone family.

Its subcellular location is the periplasm. Its function is as follows. Required for the biogenesis of type 1 fimbriae. Binds and interact with FimH. The protein is Chaperone protein FimC (fimC) of Escherichia coli O6:H1 (strain CFT073 / ATCC 700928 / UPEC).